A 1044-amino-acid polypeptide reads, in one-letter code: Translation initiation factor IF-2 (1044 aa).

The segment at 31–425 (VRSASSTVEP…RKSKRAKRQE (395 aa)) is disordered. 2 stretches are compositionally biased toward pro residues: residues 77 to 98 (GPAPAARPQAPAPAQPAPPQPA) and 106 to 116 (APAPAPAPRPA). The segment covering 117 to 148 (EPAANPAPAAPPAFQAPAPAPAERPAAAQRPA) has biased composition (low complexity). Residues 168 to 185 (GGPGQGPRPGARPGGPGA) show a composition bias toward gly residues. Residues 204–247 (GPGDRPERSERPDRGDRPQGDRPRSDRPQGERQQGDRPQGDRPG) show a composition bias toward basic and acidic residues. A compositionally biased stretch (low complexity) spans 285–304 (GGAPRPGNNPFASNQGMPRP). A compositionally biased stretch (pro residues) spans 305–328 (QGGPRPTPAGPGGPRPGGPRPNPG). A compositionally biased stretch (low complexity) spans 329–338 (MMPARPTVGR). Residues 339-409 (PGAGPGAGRP…GTQGAFGRAG (71 aa)) are compositionally biased toward gly residues. Positions 413 to 422 (VRGRKSKRAK) are enriched in basic residues. Residues 537-709 (ARPPVVTVMG…VLLTADASLD (173 aa)) enclose the tr-type G domain. The G1 stretch occupies residues 546–553 (GHVDHGKT). A GTP-binding site is contributed by 546-553 (GHVDHGKT). Residues 571–575 (GITQH) form a G2 region. Residues 596–599 (DTPG) form a G3 region. GTP is bound by residues 596–600 (DTPGH) and 650–653 (NKVD). Residues 650-653 (NKVD) are G4. The G5 stretch occupies residues 686–688 (SAR).

This sequence belongs to the TRAFAC class translation factor GTPase superfamily. Classic translation factor GTPase family. IF-2 subfamily.

It localises to the cytoplasm. In terms of biological role, one of the essential components for the initiation of protein synthesis. Protects formylmethionyl-tRNA from spontaneous hydrolysis and promotes its binding to the 30S ribosomal subunits. Also involved in the hydrolysis of GTP during the formation of the 70S ribosomal complex. This chain is Translation initiation factor IF-2, found in Kineococcus radiotolerans (strain ATCC BAA-149 / DSM 14245 / SRS30216).